The primary structure comprises 107 residues: MKNLAGLMKQATQMQARMEEMQSKLEGMTIEGSAGAGMVHVTLNGKGDMKAVKIDPKLADPAEMEMLQDLIVAACADARKLLDERASEEMKKVTGGMNLPAGLKFPF.

This sequence belongs to the YbaB/EbfC family. In terms of assembly, homodimer.

It is found in the cytoplasm. The protein localises to the nucleoid. Its function is as follows. Binds to DNA and alters its conformation. May be involved in regulation of gene expression, nucleoid organization and DNA protection. The polypeptide is Nucleoid-associated protein GDI3467/Gdia_2910 (Gluconacetobacter diazotrophicus (strain ATCC 49037 / DSM 5601 / CCUG 37298 / CIP 103539 / LMG 7603 / PAl5)).